We begin with the raw amino-acid sequence, 585 residues long: tRNA 5-methylaminomethyl-2-thiouridine biosynthesis bifunctional protein MnmC (585 aa).

A tRNA (mnm(5)s(2)U34)-methyltransferase region spans residues 1-236 (MTPDGLYCDP…KRERLEAVWP (236 aa)). The tract at residues 254–585 (LGAGIAGASL…SRRAGQGAAG (332 aa)) is FAD-dependent cmnm(5)s(2)U34 oxidoreductase. The interval 564 to 585 (EAMAPGRFAERRSRRAGQGAAG) is disordered.

It in the N-terminal section; belongs to the methyltransferase superfamily. tRNA (mnm(5)s(2)U34)-methyltransferase family. This sequence in the C-terminal section; belongs to the DAO family. The cofactor is FAD.

Its subcellular location is the cytoplasm. It catalyses the reaction 5-aminomethyl-2-thiouridine(34) in tRNA + S-adenosyl-L-methionine = 5-methylaminomethyl-2-thiouridine(34) in tRNA + S-adenosyl-L-homocysteine + H(+). Catalyzes the last two steps in the biosynthesis of 5-methylaminomethyl-2-thiouridine (mnm(5)s(2)U) at the wobble position (U34) in tRNA. Catalyzes the FAD-dependent demodification of cmnm(5)s(2)U34 to nm(5)s(2)U34, followed by the transfer of a methyl group from S-adenosyl-L-methionine to nm(5)s(2)U34, to form mnm(5)s(2)U34. This Maricaulis maris (strain MCS10) (Caulobacter maris) protein is tRNA 5-methylaminomethyl-2-thiouridine biosynthesis bifunctional protein MnmC.